A 426-amino-acid polypeptide reads, in one-letter code: Tachykinins (426 aa).

Residues 1-116 (MQCDFRVHQD…IEDNLSHEFE (116 aa)) constitute a propeptide that is removed on maturation. Arg127 carries the post-translational modification Arginine amide. Residues 131–145 (GYLTPDFEDSYFRDE) constitute a propeptide that is removed on maturation. Arg156 is subject to Arginine amide. The propeptide occupies 160–167 (VVSDDDYY). At Arg178 the chain carries Arginine amide. Residues 182 to 235 (SLEEVLGEIEKKAAMDYYDTRDKKTYVFEYPEDYEKRLLASIRGKLKEFPMEWE) constitute a propeptide that is removed on maturation. Arg246 is subject to Arginine amide. The propeptide occupies 250-259 (SLLDEIEELE). Arg270 carries the arginine amide modification. Positions 274-291 (NALENYIDYYLDPDMDFD) are excised as a propeptide. The segment at 299-329 (QGMRGKKDSDKRAPMGFQGMRGKRNTGQRFD) is disordered. Arg302 is modified (arginine amide). The propeptide occupies 306–308 (DSD). Residue Arg319 is modified to Arginine amide. Residues 323–358 (NTGQRFDTGINFNIRSSNEYQGTNNRRNALASCQLE) constitute a propeptide that is removed on maturation. Arginine amide occurs at positions 369 and 386. Residues 390–426 (WATAPYEDDSPFISVFDNTERIGVDGDSPAILGNSIS) constitute a propeptide that is removed on maturation.

This sequence belongs to the tachykinin family. In terms of tissue distribution, tachykinins (TK) are expressed throughout the nervous system. APMGFQGMR-amide is also expressed in the retrocerebral complex (at protein level).

The protein localises to the secreted. Functionally, tachykinins are active peptides which excite neurons, evoke behavioral responses, are potent vasodilators and secretagogues, and contract (directly or indirectly) many smooth muscles. In Camponotus floridanus (Florida carpenter ant), this protein is Tachykinins.